We begin with the raw amino-acid sequence, 732 residues long: Translation initiation factor IF-2 (732 aa).

Positions 40 to 147 (PEVVEKLDHT…QQEQPMKKEK (108 aa)) are disordered. Over residues 42 to 67 (VVEKLDHTYNKKNERPQASAPKEKQK) the composition is skewed to basic and acidic residues. Residues 90–103 (KVPKKKSANKKKEG) are compositionally biased toward basic residues. Positions 104–117 (KKHDLQLQQQEKKI) are enriched in basic and acidic residues. Over residues 118-129 (FHQQKKKIKGKA) the composition is skewed to basic residues. One can recognise a tr-type G domain in the interval 233 to 402 (ERPPVVTIMG…LLVSEMEELK (170 aa)). Residues 242-249 (GHVDHGKT) are G1. Position 242–249 (242–249 (GHVDHGKT)) interacts with GTP. Residues 267–271 (GITQH) are G2. The G3 stretch occupies residues 288-291 (DTPG). GTP is bound by residues 288 to 292 (DTPGH) and 342 to 345 (NKMD). A G4 region spans residues 342–345 (NKMD). Residues 378–380 (SAK) form a G5 region.

The protein belongs to the TRAFAC class translation factor GTPase superfamily. Classic translation factor GTPase family. IF-2 subfamily.

It localises to the cytoplasm. One of the essential components for the initiation of protein synthesis. Protects formylmethionyl-tRNA from spontaneous hydrolysis and promotes its binding to the 30S ribosomal subunits. Also involved in the hydrolysis of GTP during the formation of the 70S ribosomal complex. The protein is Translation initiation factor IF-2 of Geobacillus sp. (strain WCH70).